The following is a 168-amino-acid chain: G/U mismatch-specific DNA glycosylase (168 aa).

Belongs to the uracil-DNA glycosylase (UDG) superfamily. TDG/mug family. As to quaternary structure, binds DNA as a monomer.

It localises to the cytoplasm. It catalyses the reaction Specifically hydrolyzes mismatched double-stranded DNA and polynucleotides, releasing free uracil.. Its function is as follows. Excises ethenocytosine and uracil, which can arise by alkylation or deamination of cytosine, respectively, from the corresponding mispairs with guanine in ds-DNA. It is capable of hydrolyzing the carbon-nitrogen bond between the sugar-phosphate backbone of the DNA and the mispaired base. The complementary strand guanine functions in substrate recognition. Required for DNA damage lesion repair in stationary-phase cells. This chain is G/U mismatch-specific DNA glycosylase, found in Enterobacter sp. (strain 638).